The sequence spans 494 residues: Endoglucanase 22 (494 aa).

A signal peptide spans 1–21 (MKPLVCSFIVILLILLPTTIS). D76 serves as the catalytic Nucleophile. Residue H413 is part of the active site. N-linked (GlcNAc...) asparagine glycosylation is present at N468. E473 is a catalytic residue.

The protein belongs to the glycosyl hydrolase 9 (cellulase E) family.

It is found in the secreted. The enzyme catalyses Endohydrolysis of (1-&gt;4)-beta-D-glucosidic linkages in cellulose, lichenin and cereal beta-D-glucans.. The chain is Endoglucanase 22 (GH9B16) from Arabidopsis thaliana (Mouse-ear cress).